The primary structure comprises 448 residues: Protein giant (448 aa).

Disordered stretches follow at residues 23–47, 83–134, 238–259, and 298–363; these read MHHH…LPVQ, QQHQ…ASPT, VEAT…RPFK, and IRSS…TSSS. Residues 30 to 47 are compositionally biased toward low complexity; that stretch reads HHQQQPLHHLPHSQLPVQ. The span at 100 to 112 shows a compositional bias: basic and acidic residues; that stretch reads DLSRRCDSVETPR. Residues 115-134 are compositionally biased toward low complexity; sequence PSPYQTSYSYGSGSPSASPT. Residues 298–310 are compositionally biased toward polar residues; it reads IRSSNGGSRTVTN. Residues 318–333 are compositionally biased toward low complexity; the sequence is SRSGSVNEGSSSNNNS. The region spanning 384–447 is the bZIP domain; the sequence is DAAYYERRRK…AAFTSAKVTT (64 aa). Residues 390 to 406 form a basic motif region; sequence RRRKNNAAAKKSRDRRR. The segment at 407–414 is leucine-zipper; the sequence is IKEDEIAI.

Belongs to the bZIP family. Homodimer or heterodimer. Post-translationally, phosphorylated at multiple sites.

The protein localises to the nucleus. In terms of biological role, represses the expression of both the krueppel and knirps segmentation gap genes. Binds, in vitro, to the krueppel regulatory elements CD1 and CD2. It is required in the early embryo for the development of portions of the head and abdomen. This Drosophila melanogaster (Fruit fly) protein is Protein giant (gt).